The following is a 438-amino-acid chain: Porin AaxA (438 aa).

An N-terminal signal peptide occupies residues 1 to 21; it reads MISFRFLLLSGLCALGISSYA.

The protein belongs to the OprB family.

It localises to the cell outer membrane. Its function is as follows. Facilitates L-arginine uptake, as part of the AaxABC system. The arginine uptake by the bacterium in the macrophage may be a virulence factor against the host innate immune response. This is Porin AaxA (aaxA) from Chlamydia pneumoniae (Chlamydophila pneumoniae).